A 471-amino-acid polypeptide reads, in one-letter code: Ribosomal protein uS12 methylthiotransferase RimO (471 aa).

The region spanning 2-122 (IKVSLISLGC…VAPIIQEIYA (121 aa)) is the MTTase N-terminal domain. Residues cysteine 11, cysteine 47, cysteine 84, cysteine 166, cysteine 170, and cysteine 173 each contribute to the [4Fe-4S] cluster site. The Radical SAM core domain maps to 152–395 (LTPKHFAYVK…MALQKQIAAD (244 aa)). One can recognise a TRAM domain in the interval 398 to 458 (KTYVGRTLRV…DYDLLALPPG (61 aa)).

This sequence belongs to the methylthiotransferase family. RimO subfamily. It depends on [4Fe-4S] cluster as a cofactor.

Its subcellular location is the cytoplasm. The enzyme catalyses L-aspartate(89)-[ribosomal protein uS12]-hydrogen + (sulfur carrier)-SH + AH2 + 2 S-adenosyl-L-methionine = 3-methylsulfanyl-L-aspartate(89)-[ribosomal protein uS12]-hydrogen + (sulfur carrier)-H + 5'-deoxyadenosine + L-methionine + A + S-adenosyl-L-homocysteine + 2 H(+). Its function is as follows. Catalyzes the methylthiolation of an aspartic acid residue of ribosomal protein uS12. This Opitutus terrae (strain DSM 11246 / JCM 15787 / PB90-1) protein is Ribosomal protein uS12 methylthiotransferase RimO.